We begin with the raw amino-acid sequence, 172 residues long: Adenine phosphoribosyltransferase (172 aa).

The protein belongs to the purine/pyrimidine phosphoribosyltransferase family. Homodimer.

Its subcellular location is the cytoplasm. The enzyme catalyses AMP + diphosphate = 5-phospho-alpha-D-ribose 1-diphosphate + adenine. The protein operates within purine metabolism; AMP biosynthesis via salvage pathway; AMP from adenine: step 1/1. Catalyzes a salvage reaction resulting in the formation of AMP, that is energically less costly than de novo synthesis. The sequence is that of Adenine phosphoribosyltransferase from Latilactobacillus sakei subsp. sakei (strain 23K) (Lactobacillus sakei subsp. sakei).